A 335-amino-acid chain; its full sequence is Glycerol-3-phosphate dehydrogenase [NAD(P)+] (335 aa).

Residues Ser-15, Tyr-16, Arg-36, and Lys-110 each contribute to the NADPH site. Lys-110, Gly-139, and Thr-141 together coordinate sn-glycerol 3-phosphate. NADPH is bound at residue Ala-143. Sn-glycerol 3-phosphate contacts are provided by Lys-195, Asp-248, Ser-258, Arg-259, and Asn-260. Catalysis depends on Lys-195, which acts as the Proton acceptor. Position 259 (Arg-259) interacts with NADPH. Residues Val-283 and Glu-285 each contribute to the NADPH site.

The protein belongs to the NAD-dependent glycerol-3-phosphate dehydrogenase family.

Its subcellular location is the cytoplasm. It carries out the reaction sn-glycerol 3-phosphate + NAD(+) = dihydroxyacetone phosphate + NADH + H(+). The catalysed reaction is sn-glycerol 3-phosphate + NADP(+) = dihydroxyacetone phosphate + NADPH + H(+). It functions in the pathway membrane lipid metabolism; glycerophospholipid metabolism. Functionally, catalyzes the reduction of the glycolytic intermediate dihydroxyacetone phosphate (DHAP) to sn-glycerol 3-phosphate (G3P), the key precursor for phospholipid synthesis. This is Glycerol-3-phosphate dehydrogenase [NAD(P)+] from Pseudoalteromonas translucida (strain TAC 125).